The following is a 1248-amino-acid chain: Probable serine/threonine-protein kinase DDB_G0278509 (1248 aa).

5 disordered regions span residues 1–26, 40–61, 100–125, 180–220, and 235–338; these read MSKVIGYIDYGDPDGNEEPSKQNGEY, SVNGGYDKDNNNHHHHNQEEDY, QSYKLSNSGESMNRSINQSKEEDHLE, QNNN…TKNN, and SIDS…NNNK. Polar residues predominate over residues 102–117; that stretch reads YKLSNSGESMNRSINQ. The segment covering 181 to 216 has biased composition (low complexity); sequence NNNNNNSNSNSNSNSNSNNNNNNNNNNNNNNNNNNN. 13 LRR repeats span residues 386-407, 411-432, 435-457, 458-480, 481-502, 503-524, 527-548, 572-593, 595-616, 619-641, 642-663, 665-687, and 688-708; these read SSTELDLSEQELNEFPIFDEKE, GYKIIDLSFNNIKSIPLDAFTN, NLEQLIMFNNNLSDVPSSIEFLK, HLTILDLSHNNLHEICRELGNLS, FLRELYLSNNSLKKFPTTGNLY, NLKKLILDNNQITTIPIECVEP, QLQTLDLSFNKIGTITSSTTTT, NLKQLNLSHNELQEIPSSLRHL, KLHSLSIDYNQISVLPDKVVAS, RLAKLTISNNKIKQLPFAINNLS, SLIELNASNNVIELLPDSICYL, NLKKLNLNNNNLKELPSNIGFLT, and KLVDLQLYNNQISSLPISFLK. The disordered stretch occupies residues 825–873; sequence YPFQKLDPIPQSLYSSSNPRSHTESDIQKLKNNDETITTTNSSISTTSS. Basic and acidic residues predominate over residues 845 to 858; it reads SHTESDIQKLKNND. Positions 860-873 are enriched in low complexity; the sequence is TITTTNSSISTTSS. The 294-residue stretch at 946-1239 folds into the Protein kinase domain; the sequence is IQFFNLIGQG…SIYHRLENLM (294 aa). ATP contacts are provided by residues 952-960 and lysine 973; that span reads IGQGGFSKV. Catalysis depends on aspartate 1069, which acts as the Proton acceptor. The disordered stretch occupies residues 1106-1135; sequence NNTNNTATSSTTTSSANGANSISNNNNNGT.

The protein belongs to the protein kinase superfamily. TKL Ser/Thr protein kinase family.

The catalysed reaction is L-seryl-[protein] + ATP = O-phospho-L-seryl-[protein] + ADP + H(+). The enzyme catalyses L-threonyl-[protein] + ATP = O-phospho-L-threonyl-[protein] + ADP + H(+). This is Probable serine/threonine-protein kinase DDB_G0278509 from Dictyostelium discoideum (Social amoeba).